The primary structure comprises 174 residues: MKTFVLGGGCFWCLDAVYQKTKGVTSVISGYTGGHDRHPDYYSVCSGTTGHAEVVAVSFEEDVIPAEVILDMFFALHDPTTLNRQGYDVGTQYRSSMFYETTEEKILFEEAIERNQALWAHPIVTEVSRLPVFHVAEDFHQDYYAKHPEQGYCQVIINPKLAKARKYYSAWLNA.

Cysteine 10 is an active-site residue.

This sequence belongs to the MsrA Met sulfoxide reductase family.

The enzyme catalyses L-methionyl-[protein] + [thioredoxin]-disulfide + H2O = L-methionyl-(S)-S-oxide-[protein] + [thioredoxin]-dithiol. It carries out the reaction [thioredoxin]-disulfide + L-methionine + H2O = L-methionine (S)-S-oxide + [thioredoxin]-dithiol. In terms of biological role, has an important function as a repair enzyme for proteins that have been inactivated by oxidation. Catalyzes the reversible oxidation-reduction of methionine sulfoxide in proteins to methionine. The chain is Peptide methionine sulfoxide reductase MsrA from Arthrobacter sp. (strain FB24).